We begin with the raw amino-acid sequence, 156 residues long: Rhombotin-1 (156 aa).

LIM zinc-binding domains follow at residues 22 to 84 (KGCA…LFGT) and 86 to 148 (GNCA…GQLN).

It is found in the nucleus. May be involved in gene regulation within neural lineage cells potentially by direct DNA binding or by binding to other transcription factors. The chain is Rhombotin-1 from Xenopus laevis (African clawed frog).